A 190-amino-acid polypeptide reads, in one-letter code: Peptide methionine sulfoxide reductase MsrA (190 aa).

The active site involves Cys-21.

The protein belongs to the MsrA Met sulfoxide reductase family.

It catalyses the reaction L-methionyl-[protein] + [thioredoxin]-disulfide + H2O = L-methionyl-(S)-S-oxide-[protein] + [thioredoxin]-dithiol. The catalysed reaction is [thioredoxin]-disulfide + L-methionine + H2O = L-methionine (S)-S-oxide + [thioredoxin]-dithiol. Has an important function as a repair enzyme for proteins that have been inactivated by oxidation. Catalyzes the reversible oxidation-reduction of methionine sulfoxide in proteins to methionine. This Polynucleobacter asymbioticus (strain DSM 18221 / CIP 109841 / QLW-P1DMWA-1) (Polynucleobacter necessarius subsp. asymbioticus) protein is Peptide methionine sulfoxide reductase MsrA.